The primary structure comprises 1297 residues: Outer capsid protein VP1 (1297 aa).

The protein belongs to the aquareoviridae outer capsid VP1 protein family.

The protein localises to the virion. It catalyses the reaction a 5'-end diphospho-ribonucleoside in mRNA + GTP + H(+) = a 5'-end (5'-triphosphoguanosine)-ribonucleoside in mRNA + diphosphate. The enzyme catalyses a 5'-end (5'-triphosphoguanosine)-ribonucleoside in mRNA + S-adenosyl-L-methionine = a 5'-end (N(7)-methyl 5'-triphosphoguanosine)-ribonucleoside in mRNA + S-adenosyl-L-homocysteine. Outer capsid protein involved in mRNA capping. Catalyzes the last 3 enzymatic activities for formation of the 5' cap structure on the viral plus-strand transcripts, namely the RNA guanylyltransferase, RNA-7N- and RNA-2'O-methyltransferase activities. The chain is Outer capsid protein VP1 (S1) from Oncorhynchus keta (Chum salmon).